The primary structure comprises 1004 residues: DNA-directed RNA polymerase subunit beta' (1004 aa).

Positions 388, 390, and 392 each coordinate Mg(2+). C757, C831, C838, and C841 together coordinate Zn(2+).

This sequence belongs to the RNA polymerase beta' chain family. As to quaternary structure, the RNAP catalytic core consists of 2 alpha, 1 beta, 1 beta' and 1 omega subunit. When a sigma factor is associated with the core the holoenzyme is formed, which can initiate transcription. Requires Mg(2+) as cofactor. It depends on Zn(2+) as a cofactor.

It catalyses the reaction RNA(n) + a ribonucleoside 5'-triphosphate = RNA(n+1) + diphosphate. Functionally, DNA-dependent RNA polymerase catalyzes the transcription of DNA into RNA using the four ribonucleoside triphosphates as substrates. The sequence is that of DNA-directed RNA polymerase subunit beta' from Oenococcus oeni (Leuconostoc oenos).